Reading from the N-terminus, the 92-residue chain is Ribonuclease P protein component 1 (92 aa).

This sequence belongs to the eukaryotic/archaeal RNase P protein component 1 family. Consists of a catalytic RNA component and at least 4-5 protein subunits.

It localises to the cytoplasm. The catalysed reaction is Endonucleolytic cleavage of RNA, removing 5'-extranucleotides from tRNA precursor.. In terms of biological role, part of ribonuclease P, a protein complex that generates mature tRNA molecules by cleaving their 5'-ends. This chain is Ribonuclease P protein component 1, found in Desulfurococcus amylolyticus (strain DSM 18924 / JCM 16383 / VKM B-2413 / 1221n) (Desulfurococcus kamchatkensis).